Reading from the N-terminus, the 214-residue chain is Small ribosomal subunit protein uS3 (214 aa).

A KH type-2 domain is found at 39–107 (IRAYLLKKPA…EVWVAVEEVK (69 aa)).

The protein belongs to the universal ribosomal protein uS3 family. Part of the 30S ribosomal subunit. Forms a tight complex with proteins S10 and S14.

Binds the lower part of the 30S subunit head. Binds mRNA in the 70S ribosome, positioning it for translation. This is Small ribosomal subunit protein uS3 from Protochlamydia amoebophila (strain UWE25).